The chain runs to 145 residues: Antimicrobial peptide NK-lysin (145 aa).

Residues 1 to 22 (MTSRALLLLASALLGTPGLTFS) form the signal peptide. Positions 23-62 (GLNPESYDLATAHLSDGEQFCQGLTQEDLQGDLLTERERQ) are excised as a propeptide. Positions 62 to 142 (QGIACWSCRK…VDIKLCKHKA (81 aa)) constitute a Saposin B-type domain. Intrachain disulfides connect Cys66/Cys138, Cys69/Cys132, and Cys97/Cys107. A propeptide spanning residues 141-145 (KAGLI) is cleaved from the precursor.

The protein localises to the secreted. In terms of biological role, may be an effector molecule of cytotoxic activity. Has antimicrobial activity. The chain is Antimicrobial peptide NK-lysin (NKL) from Equus caballus (Horse).